Here is a 375-residue protein sequence, read N- to C-terminus: tRNA-specific 2-thiouridylase MnmA (375 aa).

Residues 8–15 (GLSGGVDS) and Met34 contribute to the ATP site. The segment at 104-106 (NPD) is interaction with target base in tRNA. Residue Cys109 is the Nucleophile of the active site. Cysteines 109 and 208 form a disulfide. Gly134 contacts ATP. An interaction with tRNA region spans residues 158 to 160 (KDQ). Cys208 serves as the catalytic Cysteine persulfide intermediate. Positions 321 to 322 (RY) are interaction with tRNA.

The protein belongs to the MnmA/TRMU family.

Its subcellular location is the cytoplasm. It carries out the reaction S-sulfanyl-L-cysteinyl-[protein] + uridine(34) in tRNA + AH2 + ATP = 2-thiouridine(34) in tRNA + L-cysteinyl-[protein] + A + AMP + diphosphate + H(+). Its function is as follows. Catalyzes the 2-thiolation of uridine at the wobble position (U34) of tRNA, leading to the formation of s(2)U34. In Mycoplasma mycoides subsp. mycoides SC (strain CCUG 32753 / NCTC 10114 / PG1), this protein is tRNA-specific 2-thiouridylase MnmA.